Here is an 85-residue protein sequence, read N- to C-terminus: Elicitor peptide 7 (85 aa).

A propeptide spanning residues 1–62 (MEGEGRREDG…TEVVNIPRSV (62 aa)) is cleaved from the precursor. Residues 66 to 85 (NVAARKGKQQTSSGKGGGTN) are disordered.

Belongs to the brassicaceae elicitor peptide family.

Its function is as follows. Elicitor of plant defense. This is Elicitor peptide 7 (PEP7) from Arabidopsis thaliana (Mouse-ear cress).